Here is a 208-residue protein sequence, read N- to C-terminus: Small ribosomal subunit protein uS4 (208 aa).

The S4 RNA-binding domain occupies 98–159 (RRLDNVAYRL…KSRKVAAISE (62 aa)).

This sequence belongs to the universal ribosomal protein uS4 family. As to quaternary structure, part of the 30S ribosomal subunit. Contacts protein S5. The interaction surface between S4 and S5 is involved in control of translational fidelity.

Functionally, one of the primary rRNA binding proteins, it binds directly to 16S rRNA where it nucleates assembly of the body of the 30S subunit. Its function is as follows. With S5 and S12 plays an important role in translational accuracy. In Citrifermentans bemidjiense (strain ATCC BAA-1014 / DSM 16622 / JCM 12645 / Bem) (Geobacter bemidjiensis), this protein is Small ribosomal subunit protein uS4.